The sequence spans 335 residues: Holliday junction branch migration complex subunit RuvB (335 aa).

Residues 1 to 183 (MDERIISSET…FGVIDHLEFY (183 aa)) form a large ATPase domain (RuvB-L) region. ATP-binding positions include leucine 22, arginine 23, glycine 64, lysine 67, threonine 68, threonine 69, 130-132 (EDY), arginine 173, tyrosine 183, and arginine 220. Residue threonine 68 participates in Mg(2+) binding. A small ATPAse domain (RuvB-S) region spans residues 184–254 (TEEQLTEIVL…LAKEALTLLQ (71 aa)). The head domain (RuvB-H) stretch occupies residues 257–335 (PRGLDTIDQK…HLGISYEKEV (79 aa)). 3 residues coordinate DNA: arginine 293, arginine 312, and arginine 317.

It belongs to the RuvB family. As to quaternary structure, homohexamer. Forms an RuvA(8)-RuvB(12)-Holliday junction (HJ) complex. HJ DNA is sandwiched between 2 RuvA tetramers; dsDNA enters through RuvA and exits via RuvB. An RuvB hexamer assembles on each DNA strand where it exits the tetramer. Each RuvB hexamer is contacted by two RuvA subunits (via domain III) on 2 adjacent RuvB subunits; this complex drives branch migration. In the full resolvosome a probable DNA-RuvA(4)-RuvB(12)-RuvC(2) complex forms which resolves the HJ.

It is found in the cytoplasm. The catalysed reaction is ATP + H2O = ADP + phosphate + H(+). Its function is as follows. The RuvA-RuvB-RuvC complex processes Holliday junction (HJ) DNA during genetic recombination and DNA repair, while the RuvA-RuvB complex plays an important role in the rescue of blocked DNA replication forks via replication fork reversal (RFR). RuvA specifically binds to HJ cruciform DNA, conferring on it an open structure. The RuvB hexamer acts as an ATP-dependent pump, pulling dsDNA into and through the RuvAB complex. RuvB forms 2 homohexamers on either side of HJ DNA bound by 1 or 2 RuvA tetramers; 4 subunits per hexamer contact DNA at a time. Coordinated motions by a converter formed by DNA-disengaged RuvB subunits stimulates ATP hydrolysis and nucleotide exchange. Immobilization of the converter enables RuvB to convert the ATP-contained energy into a lever motion, pulling 2 nucleotides of DNA out of the RuvA tetramer per ATP hydrolyzed, thus driving DNA branch migration. The RuvB motors rotate together with the DNA substrate, which together with the progressing nucleotide cycle form the mechanistic basis for DNA recombination by continuous HJ branch migration. Branch migration allows RuvC to scan DNA until it finds its consensus sequence, where it cleaves and resolves cruciform DNA. The polypeptide is Holliday junction branch migration complex subunit RuvB (Listeria innocua serovar 6a (strain ATCC BAA-680 / CLIP 11262)).